We begin with the raw amino-acid sequence, 257 residues long: High-affinity copper transporter ctrC (257 aa).

2 helical membrane-spanning segments follow: residues 79–99 (RGMF…LEFL) and 202–222 (YFNG…SFIF).

Belongs to the copper transporter (Ctr) (TC 1.A.56) family. SLC31A subfamily.

Its subcellular location is the cell membrane. The catalysed reaction is Cu(2+)(in) = Cu(2+)(out). High-affinity copper transporter of plasma membrane that mediates copper uptake under low copper conditions. The mechanism driving the transmembrane transport of copper has still to be determined. Acts as a potential virulence factor. The sequence is that of High-affinity copper transporter ctrC from Aspergillus fumigatus (strain ATCC MYA-4609 / CBS 101355 / FGSC A1100 / Af293) (Neosartorya fumigata).